We begin with the raw amino-acid sequence, 1576 residues long: Protein Shroom (1576 aa).

Disordered stretches follow at residues 1–31 (MKMR…ENNN), 46–100 (SNGA…TQAG), 112–142 (YDQT…DSTS), 187–244 (RQSH…SSTE), 267–434 (ISES…ISVT), 589–609 (VERQ…HSQS), and 621–660 (PNNL…SLLP). Residues 10–21 (GNGSEMGESTKS) are compositionally biased toward polar residues. Low complexity-rich tracts occupy residues 46–69 (SNGA…AGSV), 76–91 (HNSS…GSSL), and 128–142 (SEGY…DSTS). The span at 189 to 211 (SHSHSHSHAHSHSNSHGHSHGHA) shows a compositional bias: basic residues. Low complexity-rich tracts occupy residues 212–244 (HSAS…SSTE) and 267–283 (ISES…SSRV). Over residues 305 to 317 (DSSPTASNSSQMM) the composition is skewed to polar residues. Residues 376-388 (QSTLSTQSSLLEL) are compositionally biased toward low complexity. Over residues 399 to 415 (MGQSHSMGDLQQKNPHQ) the composition is skewed to polar residues. S404 is subject to Phosphoserine. The interval 445–920 (APQPPAGKPS…LESNQQKRSN (476 aa)) is F-actin binding region required for planar polarity and cortical localization. A compositionally biased stretch (polar residues) spans 633-643 (TGSNSASTRDC). Residues S667 and S668 each carry the phosphoserine modification. Disordered stretches follow at residues 699 to 728 (ISFN…SSAT), 743 to 823 (AALA…NCFA), 849 to 876 (VPKK…HHAT), 910 to 939 (NLES…NTDP), 1036 to 1055 (GYGK…SQSY), 1091 to 1116 (PTAT…SHSD), and 1210 to 1244 (SFAN…DVHD). The segment covering 748-759 (QQHHPQQHRHAQ) has biased composition (basic residues). A compositionally biased stretch (pro residues) spans 798-816 (PLPPPPPPEVLQPRPPPSP). Polar residues-rich tracts occupy residues 910–923 (NLES…NSKA) and 1042–1055 (KPVT…SQSY). Composition is skewed to pro residues over residues 1094-1108 (TPTP…PPRL) and 1217-1229 (MTPP…PPPL). Positions 1230 to 1239 (EPEEEEEQEE) are enriched in acidic residues. Positions 1232 to 1296 (EEEEEQEEND…LEAAREEHQT (65 aa)) form a coiled coil. The 268-residue stretch at 1305 to 1572 (RQPIELDYEQ…QLSSLSDALV (268 aa)) folds into the ASD2 domain.

The protein belongs to the shroom family. As to quaternary structure, monomer or homodimer. Interacts with Rok. In terms of assembly, binds (via N-terminus) to F-actin.

It localises to the cell junction. The protein localises to the adherens junction. The protein resides in the cytoplasm. It is found in the cytoskeleton. Its subcellular location is the apical cell membrane. Its function is as follows. Binds to Rho-kinase Rok and targets it to the apical cell cortex where it mediates apical constriction. During embryogenic axis elongation, required for the localization to adherens junctions and the establishment of planar polarization of both Rho-kinase Rok and myosin regulatory light chain sqh. May be involved in the assembly of microtubule arrays during cell elongation. This Drosophila melanogaster (Fruit fly) protein is Protein Shroom.